The following is a 211-amino-acid chain: Large ribosomal subunit protein bL25 (211 aa).

The interval 175-211 (VSEPVEQDLGEESETEEEGAEGEKPAESTGEEPGDDE) is disordered. A compositionally biased stretch (acidic residues) spans 179–194 (VEQDLGEESETEEEGA).

This sequence belongs to the bacterial ribosomal protein bL25 family. CTC subfamily. As to quaternary structure, part of the 50S ribosomal subunit; part of the 5S rRNA/L5/L18/L25 subcomplex. Contacts the 5S rRNA. Binds to the 5S rRNA independently of L5 and L18.

Its function is as follows. This is one of the proteins that binds to the 5S RNA in the ribosome where it forms part of the central protuberance. The chain is Large ribosomal subunit protein bL25 from Kocuria rhizophila (strain ATCC 9341 / DSM 348 / NBRC 103217 / DC2201).